The sequence spans 294 residues: Putative deoxyribonuclease TATDN3 (294 aa).

Residues H9, H11, E104, H144, H167, and D215 each coordinate Zn(2+).

The protein belongs to the metallo-dependent hydrolases superfamily. TatD-type hydrolase family. It depends on Mn(2+) as a cofactor. The cofactor is Ca(2+). Mg(2+) is required as a cofactor. Requires Zn(2+) as cofactor.

Its subcellular location is the nucleus. The 3'-exonuclease activity is sensitive to the metal ion present in the active site, whereas the AP endodeoxyribonuclease activity is observed in a variety of divalent metal cofactors. 3'-exoxonuclease activity is suppressed in the presence of Ca(2+), Zn(2+) and Ni(2+). In terms of biological role, exhibits 3'-exonuclease activities and apurinic/apyrimidinic (AP) endonuclease (in vitro). Show preferential AP endonuclease activity on double-stranded DNA substrates and 3'- exonuclease activity on single-stranded DNA. In Mus musculus (Mouse), this protein is Putative deoxyribonuclease TATDN3 (Tatdn3).